The primary structure comprises 338 residues: Inositol 2-dehydrogenase 3 (338 aa).

Belongs to the Gfo/Idh/MocA family. In terms of assembly, homotetramer.

The catalysed reaction is myo-inositol + NAD(+) = scyllo-inosose + NADH + H(+). Functionally, involved in the oxidation of myo-inositol (MI) to 2-keto-myo-inositol (2KMI or 2-inosose). In Saccharopolyspora erythraea (strain ATCC 11635 / DSM 40517 / JCM 4748 / NBRC 13426 / NCIMB 8594 / NRRL 2338), this protein is Inositol 2-dehydrogenase 3.